The sequence spans 316 residues: Secondary metabolism regulator laeA (316 aa).

It belongs to the methyltransferase superfamily. LaeA methyltransferase family. Component of the heterotrimeric velvet complex composed of laeA, veA and velB; VeA acting as a bridging protein between laeA and velB.

It is found in the nucleus. It carries out the reaction L-methionyl-[protein] + S-adenosyl-L-methionine = S-methyl-L-methionyl-[protein] + S-adenosyl-L-homocysteine. Functionally, methyltransferase that performs automethylation. No other methyl-accepting substrate has been identified yet. Component of the velvet transcription factor complex that acts as a global regulator for secondary metabolite gene expression. Controls the biosynthetic gene cluster for beauvericin, a depsipeptide mycotoxin that functions as a virulence determinant. The velvet complex also regulates chromatin structure and transcription of siderophore biosynthetic genes and is required for infection of tomato plants. The velvet complex also governs expression of nitrate metabolism genes. This Fusarium oxysporum f. sp. lycopersici (strain 4287 / CBS 123668 / FGSC 9935 / NRRL 34936) (Fusarium vascular wilt of tomato) protein is Secondary metabolism regulator laeA.